A 70-amino-acid polypeptide reads, in one-letter code: Large ribosomal subunit protein eL24 (70 aa).

Cys6, Cys9, Cys32, and Cys36 together coordinate Zn(2+). The C4-type zinc-finger motif lies at 6-36 (CSYCGRPIPPGYGIMYVRVDGVVLRFCSRRC).

Belongs to the eukaryotic ribosomal protein eL24 family. Part of the 50S ribosomal subunit. Forms a cluster with proteins L3 and L14. Zn(2+) is required as a cofactor.

Binds to the 23S rRNA. The sequence is that of Large ribosomal subunit protein eL24 from Caldivirga maquilingensis (strain ATCC 700844 / DSM 13496 / JCM 10307 / IC-167).